We begin with the raw amino-acid sequence, 301 residues long: Protein p34 (301 aa).

5 consecutive transmembrane segments (helical) span residues 15 to 35, 40 to 60, 83 to 103, 120 to 140, and 171 to 191; these read YLSV…WVVT, ILAA…NLIA, TIFS…FSSV, TVMY…TYVI, and LSDY…LYIF.

This sequence belongs to the cation diffusion facilitator (CDF) transporter (TC 2.A.4) family.

It is found in the cell membrane. The polypeptide is Protein p34 (p34) (Rickettsia rickettsii (strain Sheila Smith)).